A 280-amino-acid polypeptide reads, in one-letter code: Dexamethasone-induced Ras-related protein 1 (280 aa).

The residue at position 11 (Cys-11) is an S-nitrosocysteine. 31–38 (GSSKVGKT) is a GTP binding site. The Effector region motif lies at 53–61 (YTPTIEDFH). Residues 78–82 (DTSGN) and 145–148 (NKGD) contribute to the GTP site. Cys-277 is modified (cysteine methyl ester). A lipid anchor (S-farnesyl cysteine) is attached at Cys-277. A propeptide spans 278 to 280 (VIS) (removed in mature form).

This sequence belongs to the small GTPase superfamily. RasD family. As to quaternary structure, component of a complex, at least composed of APBB1, RASD1/DEXRAS1 and APP. Interacts with APBB1/FE65. Forms a ternary complex with CAPON and NOS1. In terms of processing, S-nitrosylation stimulates guanine-nucleotide exchange activity. In terms of tissue distribution, expressed in brain, heart, kidney and liver.

The protein localises to the cell membrane. It is found in the cytoplasm. The protein resides in the perinuclear region. It localises to the nucleus. Small GTPase. Negatively regulates the transcription regulation activity of the APBB1/FE65-APP complex via its interaction with APBB1/FE65. The sequence is that of Dexamethasone-induced Ras-related protein 1 (Rasd1) from Mus musculus (Mouse).